Here is a 3903-residue protein sequence, read N- to C-terminus: MLAPTDWTDAEILAAAAQAAREEFFGAQRARVGDTGAQDEARGGGVPFLLVRKQLVRLLDEMGVGLQSTRGLQVYRHLLQHVVQATVGECGHDMILFSEESRALFMPPVNGAGGTAASRLANANSWSLASSPSVVSSGPAPVLVSASPGPSGLSDRSFNETTPRVSASSSSAPSSSSSSSPVSFSPSSGPVSSSSTFPPSSSSACPSSSSSSSSSSFSSCSSCSSSPLASATARVQAFAARRKAGEDHRLLLDALREWRRWAAREARLRSLFWTLSSRRRLRALRRSLHAWRANFIEALSRREDSNEEAADGQRTAAVCRRSLLAWSAGVETQSAEARGQVARAAPAEEGCQRYEALQTSFRSWREATVAQREAERQRRLLSAFKAWKESHLSRRVRKQVLEHRAFAVQKSLQDRHMRGVWRYWRAAAEARSRAGAAARETLERTRFRRVFNALLAETRDRQTRRGAAVAAAEATVRERRVRRAFRAWRKVSILRRPPFAAGHSQFSSPQIVCLLKAVSALRREGASEEPGHARSLGEALLDAATARQRRERAQRRGDRDGEETELGRDAQVDLEDAALLTLIPLHGIDLHLPKLSTAAPLMAQALRQHYLRHSFLQWRAEALRQRQFRQAARVSRLARVFRAWREETQKAKGEAAASSAVYAAQKTRILREAWRSWRMRFRRYVLFRTQCRSLQDLRLLHLKSLAFRGWCTFHRERQREAQSVSAVKDRAAAALQRAAWSRWQEAWHLRRRRRAMAEAAALLREKTLLAKGLRGLKRQRASAASLRDAAAALRQERLGLALAVWWRWAARRGAFQELCELQRAKRARRNLRRLLLAWRSLAKRMETRRDAVWRLAAVVDRIRVRRGFCGWNALRMQERKREEAASRLQRTLRDARIRAAWAAWRSAQSLACKEAELRKESEDSLKRRVFKQWQAAAAEHATLQLHLRGQLLCWRLSRLLHRWRRLATLFRLGLLQKSRSRLYVLRRCQEAWLARLAERSEERRKEARAESLCLTLRLRAAQRCLLAWQETAVAVAARRRKGDTFRAQLHRARLDAAWTTWRRGVEELHRRRRLLLGVEKIREKILVAQSLTRWKCAAALLRKEALATQARRQALLRRALQAWTLWRRRRTEKKDEAERVRACLNEEGSAKRAGERQRKKETLAAWHALTEKRFEERRAFSRVEAIGDRLSLRRGFVTWRLWALRLAGLSQATVRLDVWRRRCLLRISYEALSQHRDRVKEMELASLAHLSQLRAQTLRRSFCSWRTQFAALRREAEVLARRRSAAARAEAHAALACKRRSFLAWLKALAAKLALKKRLFVLLKERREALEARTLRAWRRLAKKKGDLRESLEMFSDSRRSQCLRRVFAAVFATVSRRRLVRVRFLFALGLLAPSPDFSVSSAESSHPHSRSLLLPLSPLGPAEEASLRLLWGPALPAPLLAPRLIPRLPGPSRAFESAKECPSVLASLPLVPRLIVWSAQPHMLHLLLLQPAIAESLARQAGQQPQRSAAFFEPLPVSRARLALFSDADAEARTRVWGLPAASLGGEETPGGDKGNGALPLAALASARSRPPSVWSCLTPSTCTPHTSLSVPLSGFEAPPPRPGRTFFRTETGDTLGSARSQFRGRSASPLHSDGPSGREAGSRRHRSATKERDREDREEIDELLLADKKSSKSLERLLRCFSAKQGPEGPLKENAELWGEQAVLADSVRRMRPQNDLQALLLAQVNLSRRPSVQRPAPLFLPSAMGPDAAVSDALDASQDSVESDGSAGGLSVHSEETPLPSKNWREEIPVDLLATAWQFARLLQAALRAWLLQAQRHKAQRLRETGLVAGFRIQSRSRLLAACWGLWRSTKSSLEARTRTKAQRLAWGIQRRVLQAWFLCATVDASAVLRAEAFAETRRSAKTHAMLEAWRGVATKRRQEREQVEAWRQHRARERKQELFALWTHLASVNRAGAQLYVHRRAATLNKVFATWRTSTLRSLALDKLQRIVSRPGLFLGFSLLRIWSLTRACSLRLAAQCLDSWRQHTESRKRLAGLLVYVQTVHKVSRLQQHFSAWLLVQQRRRRLLLLHRTAEAAAFLLPLHRIFSRWRASALDRQAQRDSLLGRFLAQRQRPFLALDPEESAEAKDAGRLGTTPSCAYWARWRIEETWKVWRRRFRLRTLLRRRATRCARTALSALRQAVERRRALEAFERKRRQRLLQRATVAWQVYVQRRLLKQQRTAHAIERYNTHTLRQAFSKCRWLLQRLQWERGVIEVSQAKANRRVCRMTLQALQAYAEARVAERERLDGCRAARSSHLLRMHFEKWSFLLRATHHAASLSRKTSFLLWTRAFRRSRGAALLVAVQRRVEERQTRRGLAALQAESEAFEQIKAFGAETPWLRDAIEEKVSSARASMTFALSSLRLFAAHRVSRRRQARLLAGALASWARLQETDGPRRRLRPYLRHWRGALQYRLHLQAAEEALRRHVEFRRLREVWGAWRHLRREEARGRELLALAEETKKVWALEKGILLLHEHRLQREWMTWCTYRAELFVTDTRHEKARLCVRAWHSWVAKRRELRRRGLEAQEASRLFVLSNAFSALRCAYTRRTALRAAGACVVEKQKRSSLRTAWRGWRKVLVDLLALKPRLEALLARQAFQRVCLAWWGWRMWHQRRKERRQLLGPLSEKARVVRDVQLAAQCFRGWAELAETRATFWRQREGLVEKLVARRLTKETFRAWRLCAREIHFVRSTKAAAANAAALAAAGHGMREMHLPAQAPADRRGRPGPSRETTMSPASSLFSSASVSPTASRRNRRRGGRSGRPRGRDLLSSSLSLSDSQPLERLSQASDRRGGESQTDGDSGDMSETVRRRPGCQRPSEAAPGSPPGGRSKRVHAAAGRRRQGAREILEEREISRLARSAVAWLPRAAERSDEAEERALRRRSASAVFGSRGRDGESGLGEMRSTTGPAGGHRAWESEASGEDTEGEEGPRNLQGQEAEASTSGKKARGTCGLAVSFSLGSPLSSDRPSSPLSVAAHEPPPPPGKTRLHRVSSSLSSPRPRGAHAKETPAGPPSSPSSASSASLRQGPRQLRLQDLLSDSSSSLASAQPAPVFAPQENRGKSKSDSVESPSPLTVATSLLEALSHSHSSALAEAARSLLLQSGARNPDTKPAASSRDLSESDRSKSFSSADSEMDRTATEDSEDDRGPQGGRRGVRRRRSSPVRRGDRSRRVRREEEEETRRRSTRRRRAAESEQLGEEEDVEEVEEEEVEEEEVEEEEGVSGVEVSLVEKRAEERIRVFPRAIREAPPSAFALPSSLSSLFLTSLQGAQGSRSAETQAREEPRVGRVLALAHSLAGSASRFERGGDEDRVEDEGQSVESARLSTASLDAGERDRVPRKGGKRDHPFFFSLMSSTPSLRDQASGGQSSCSSSPASPSSESSVCVGGPRRRAVGAAKEPLGTRDEAKELRANCDLAEEPASLAGGAAAHRPDPQGAALTEKLRRIVALAVANRLQSPAAASEEDTEENEGVEKEGADEEEDVVHSETGGEAENRAERGRLSLISSTLSTTLLLSELAAPQEDEGVPLGSRSAASASHEETGESREEQETTGCERDSPGVAHRLLLHPATFSLARGSLPPISEGATGSRSSPSPDRLAASTQSEAAAEPTETGDSEAELRKLLARLERVEELHRARDFIGAEADDSGALPVANMQSSVDLRSACEAPQDTERQRRRPERMQSPSPPASPSVAPARRLESEAGANRGVPELSVSPVAGAQEFVFEGNPDAAETGNEVAEVQRQERRRAAEAEAAVAQNAEDERTEREPRDEEAASGGQREEEEWLQDIVAVSRRKAAEARARDQRDESERDARKDTESIAGSEELLEEAWKEARAETRNALLEIHREMKGVALYDGDARDASRT.

2 N-linked (GlcNAc...) asparagine glycosylation sites follow: Asn159 and Asn1728.

As to quaternary structure, interacts with CEN1.

The protein resides in the cytoplasm. It is found in the cytoskeleton. Its subcellular location is the microtubule organizing center. It localises to the centrosome. Its function is as follows. Part of the centrosome outer core complex. Plays a role in the initiation and assembly of daughter buds. This chain is Centrin-binding protein SFI1, found in Toxoplasma gondii (strain ATCC 50611 / Me49).